The sequence spans 725 residues: MDDSDTPTYYLQIEPQDGCHPGDSVERSVTCLPSASDENENQLDGDGHEHLTSSDSAMGKPQVSEQDSLNNNESCTLSCEVAAGENLQNTLCEASRDEQAFLGKDKKIPGKRSPRSKKGTAKKIPPGLFSGDIAPLMQEKVLSAVTYAVDDEEAAEVNANEQPEAPKLVLQSLFSLIRGEVEQLDSRALPLCLHQIAESYFQEEDYEKAMKFIQLERLYHEQLLANLSAIQEQWETKWKTVQPHTVTALRNSEKGFNGEDFERLTKICATHQDPLLSKHKIAAVEKSQERKCSTQLLVSEDPKEGGATTKESESKTCLGTESSKESQHTVEPLGSSPCCHQMDVQTDSPSLSVTAGKDHMEELLCSAEATLALHTQSSETAGSPSGPDSSEDACEDDSRLQLAQTEACQDVARIEGIAEDPKVFLSSKSKTEPLISPGCDRIPPALISEGKYSQAQRKELRLPLRDASEALPTDQLENNELNELQQPDLTDSDGKSPQAQADSDGSENVLCGNNQISDLGILLPEVCMAPEEKGDKDDQLNKETEDYLNSLLEGCLKDTEDSLSYEDNQDDDSDLLQDLSPEEASYSLQENLPSDESCLSLDDLAKRIEIAEVVPTEGLVSILKKRNDTVGDHPAQMQHKPSKRRVRFQEIDDSLDQDEVGGGSCILLVLLCIATVFLSVGGTALYCTFGDMESPVCTDFADNMDFYYTKLLQGVAELKHWIYLS.

5 disordered regions span residues 1–72, 103–124, 296–353, 375–397, and 485–510; these read MDDS…LNNN, GKDK…AKKI, LLVS…SLSV, TQSS…CEDD, and QQPD…ENVL. At 1–664 the chain is on the cytoplasmic side; the sequence is MDDSDTPTYY…LDQDEVGGGS (664 aa). Over residues 63-72 the composition is skewed to polar residues; it reads VSEQDSLNNN. The span at 109–121 shows a compositional bias: basic residues; the sequence is PGKRSPRSKKGTA. Positions 300–314 are enriched in basic and acidic residues; sequence EDPKEGGATTKESES. 2 stretches are compositionally biased toward polar residues: residues 343–353 and 375–388; these read DVQTDSPSLSV and TQSS…SGPD. Residues 665-685 form a helical membrane-spanning segment; sequence CILLVLLCIATVFLSVGGTAL. Over 686–725 the chain is Extracellular; that stretch reads YCTFGDMESPVCTDFADNMDFYYTKLLQGVAELKHWIYLS.

It belongs to the CNST family. In terms of assembly, interacts with connexins GJA1/CX43, GJB1/CX32, GJB2/CX26, GJB3/CX31, GJB6/CX30 and GJC1/CX45. Also interacts with GGA1 and GGA2. Does not interact with PANX1.

Its subcellular location is the cell membrane. The protein localises to the golgi apparatus. The protein resides in the trans-Golgi network membrane. It localises to the cytoplasmic vesicle. It is found in the secretory vesicle. Its function is as follows. Required for targeting of connexins to the plasma membrane. In Homo sapiens (Human), this protein is Consortin (CNST).